The chain runs to 707 residues: Keratin, type II cytoskeletal 2 epidermal (707 aa).

The tract at residues 1–20 (MSCQISCRSRRGGGGGGGGG) is disordered. The tract at residues 1 to 198 (MSCQISCRSR…DPEIQNVKSQ (198 aa)) is head. At R22 the chain carries Asymmetric dimethylarginine. S25 and S28 each carry phosphoserine. Over residues 29–38 (AVVSGGSRRS) the composition is skewed to low complexity. The interval 29-59 (AVVSGGSRRSNTSFSCISRHGGGRGGSGGGG) is disordered. R52 bears the Omega-N-methylarginine mark. A Phosphoserine modification is found at S64. A coil 1A region spans residues 199-234 (EREQIKTLNNKFASFIDKVRFLEQQNQVLRTKWELL). The IF rod domain occupies 199-512 (EREQIKTLNN…KLLEGEECRM (314 aa)). The tract at residues 235 to 253 (QQLDVGSRTTNLDPIFQAY) is linker 1. The interval 254–345 (IGMLKKQVDR…TLYDAELSQL (92 aa)) is coil 1B. The linker 12 stretch occupies residues 346 to 369 (QQDVTDTNVILSMDNNRNLDLDSI). The segment at 370 to 508 (IAEVQNQYEM…ATYRKLLEGE (139 aa)) is coil 2. The tract at residues 509-707 (ECRMSGDFSD…CGSGVTFSFR (199 aa)) is tail. Positions 531–707 (SSVASKTGFG…CGSGVTFSFR (177 aa)) are disordered. The span at 539–700 (FGSGGQSSGG…GSGSGEGCGS (162 aa)) shows a compositional bias: gly residues. R555, R593, R607, and R675 each carry omega-N-methylarginine.

It belongs to the intermediate filament family. In terms of assembly, heterotetramer of two type I and two type II keratins. Associates with KRT10. In terms of tissue distribution, expressed predominantly in the suprabasal layers of the plantar epidermis outside of the footpads (at protein level). Expressed in the suprabasal layers of the interfollicular epidermis of the ear, in the interscale regions distant from the hair follicles in the tail, and in the soles of the footpads (at protein level). Expressed mainly in the middle spinous and granular cells of the epidermis of adult tail, nipple and footsole skin. Also found in ear.

The protein localises to the cytoplasm. In terms of biological role, probably contributes to terminal cornification. Associated with keratinocyte activation, proliferation and keratinization. Required for maintenance of corneocytes and keratin filaments in suprabasal keratinocytes in the epidermis of the ear, potentially via moderation of expression and localization of keratins and their partner proteins. Plays a role in the establishment of the epidermal barrier on plantar skin. The chain is Keratin, type II cytoskeletal 2 epidermal from Mus musculus (Mouse).